The sequence spans 184 residues: UPF0301 protein SPO0296 (184 aa).

Belongs to the UPF0301 (AlgH) family.

The polypeptide is UPF0301 protein SPO0296 (Ruegeria pomeroyi (strain ATCC 700808 / DSM 15171 / DSS-3) (Silicibacter pomeroyi)).